Reading from the N-terminus, the 326-residue chain is rRNA 2'-O-methyltransferase fibrillarin (326 aa).

Positions 1-84 (MAFQPGSRGG…GGARGGAKGG (84 aa)) are disordered. The segment covering 7-83 (SRGGRGGARG…RGGARGGAKG (77 aa)) has biased composition (gly residues). Arg8, Arg11, Arg15, Arg19, Arg23, Arg26, Arg32, Arg36, Arg39, Arg45, Arg49, Arg55, Arg59, Arg63, Arg67, Arg71, Arg74, and Arg78 each carry asymmetric dimethylarginine. S-adenosyl-L-methionine contacts are provided by residues 180–181 (TS), 199–200 (EF), 224–225 (DA), and 244–247 (DVAQ).

Belongs to the methyltransferase superfamily. Fibrillarin family. In terms of assembly, component of box C/D small nucleolar ribonucleoprotein (snoRNP) particles that contain SNU13, NOP1, SIK1/NOP56 and NOP58, plus a guide RNA. By homology to other fibrillarins, some or all of the N-terminal domain arginines are modified to asymmetric dimethylarginine (DMA).

It is found in the nucleus. Its subcellular location is the nucleolus. It catalyses the reaction L-glutaminyl-[histone H2A] + S-adenosyl-L-methionine = N(5)-methyl-L-glutaminyl-[histone H2A] + S-adenosyl-L-homocysteine + H(+). In terms of biological role, S-adenosyl-L-methionine-dependent methyltransferase that has the ability to methylate both RNAs and proteins. Involved in pre-rRNA processing. Utilizes the methyl donor S-adenosyl-L-methionine to catalyze the site-specific 2'-hydroxyl methylation of ribose moieties in pre-ribosomal RNA. Site specificity is provided by a guide RNA that base pairs with the substrate. Methylation occurs at a characteristic distance from the sequence involved in base pairing with the guide RNA. Also acts as a protein methyltransferase by mediating methylation of 'Gln-105' of histone H2A (H2AQ105me), a modification that impairs binding of the FACT complex and is specifically present at 35S ribosomal DNA locus. This is rRNA 2'-O-methyltransferase fibrillarin (NOP1) from Eremothecium gossypii (strain ATCC 10895 / CBS 109.51 / FGSC 9923 / NRRL Y-1056) (Yeast).